We begin with the raw amino-acid sequence, 72 residues long: UPF0270 protein YheU (72 aa).

This sequence belongs to the UPF0270 family.

The polypeptide is UPF0270 protein YheU (Escherichia coli (strain UTI89 / UPEC)).